A 439-amino-acid polypeptide reads, in one-letter code: Ribosomal protein uS12 methylthiotransferase RimO (439 aa).

The region spanning 3–118 (KKFYITTLGC…AGKILREKFP (116 aa)) is the MTTase N-terminal domain. 6 residues coordinate [4Fe-4S] cluster: cysteine 12, cysteine 48, cysteine 81, cysteine 157, cysteine 161, and cysteine 164. The region spanning 143 to 370 (NYSKPYAYVK…RDVHLAILEE (228 aa)) is the Radical SAM core domain. The TRAM domain occupies 373–438 (ESRIGQTYDA…EYDMNGTWIS (66 aa)).

The protein belongs to the methylthiotransferase family. RimO subfamily. [4Fe-4S] cluster serves as cofactor.

It localises to the cytoplasm. The catalysed reaction is L-aspartate(89)-[ribosomal protein uS12]-hydrogen + (sulfur carrier)-SH + AH2 + 2 S-adenosyl-L-methionine = 3-methylsulfanyl-L-aspartate(89)-[ribosomal protein uS12]-hydrogen + (sulfur carrier)-H + 5'-deoxyadenosine + L-methionine + A + S-adenosyl-L-homocysteine + 2 H(+). Functionally, catalyzes the methylthiolation of an aspartic acid residue of ribosomal protein uS12. This Leptospira borgpetersenii serovar Hardjo-bovis (strain L550) protein is Ribosomal protein uS12 methylthiotransferase RimO.